Here is a 378-residue protein sequence, read N- to C-terminus: Succinate--CoA ligase [GDP-forming] subunit beta (378 aa).

The 227-residue stretch at 9–235 folds into the ATP-grasp domain; sequence KEILARYGVP…VEAEHPLEVE (227 aa). GTP-binding positions include lysine 45, 52 to 54, valine 94, and glutamate 99; that span reads GRG. Mg(2+) is bound by residues asparagine 190 and aspartate 204. Substrate-binding positions include asparagine 255 and 312–314; that span reads GIT.

It belongs to the succinate/malate CoA ligase beta subunit family. In terms of assembly, heterotetramer of two alpha and two beta subunits. Mg(2+) serves as cofactor.

It catalyses the reaction GTP + succinate + CoA = succinyl-CoA + GDP + phosphate. It carries out the reaction succinate + ATP + CoA = succinyl-CoA + ADP + phosphate. It participates in carbohydrate metabolism; tricarboxylic acid cycle; succinate from succinyl-CoA (ligase route): step 1/1. Its function is as follows. Succinyl-CoA synthetase functions in the citric acid cycle (TCA), coupling the hydrolysis of succinyl-CoA to the synthesis of either ATP or GTP and thus represents the only step of substrate-level phosphorylation in the TCA. The beta subunit provides nucleotide specificity of the enzyme and binds the substrate succinate, while the binding sites for coenzyme A and phosphate are found in the alpha subunit. Can use either ATP or GTP, but prefers GTP. The polypeptide is Succinate--CoA ligase [GDP-forming] subunit beta (Thermus thermophilus).